Reading from the N-terminus, the 120-residue chain is Large-conductance mechanosensitive channel (120 aa).

The next 2 membrane-spanning stretches (helical) occupy residues 7–27 and 64–84; these read EFAL…GAAF and GLFI…FIFV.

It belongs to the MscL family. As to quaternary structure, homopentamer.

The protein localises to the cell membrane. Channel that opens in response to stretch forces in the membrane lipid bilayer. May participate in the regulation of osmotic pressure changes within the cell. The sequence is that of Large-conductance mechanosensitive channel from Staphylococcus aureus (strain Mu3 / ATCC 700698).